The sequence spans 203 residues: IMP cyclohydrolase (203 aa).

This sequence belongs to the archaeal IMP cyclohydrolase family.

The catalysed reaction is IMP + H2O = 5-formamido-1-(5-phospho-D-ribosyl)imidazole-4-carboxamide. Its pathway is purine metabolism; IMP biosynthesis via de novo pathway; IMP from 5-formamido-1-(5-phospho-D-ribosyl)imidazole-4-carboxamide: step 1/1. Functionally, catalyzes the cyclization of 5-formylamidoimidazole-4-carboxamide ribonucleotide to IMP. This chain is IMP cyclohydrolase, found in Methanococcus aeolicus (strain ATCC BAA-1280 / DSM 17508 / OCM 812 / Nankai-3).